Consider the following 1697-residue polypeptide: MNVQAHMSGQVSNQGTMSQQNGNSQMQNLVGGGSAPATGAGLGPSRVSPVDNDILKLRQAMRIRIFNILQQKQPSPADEASKAKYMDVARRLEEGLFKIANTKEDYVNPSTLEPRLASLIKGRQLNNYNQRHANSSSVGTMIPTPGLQHSGGNPNLMITSSGDATMAGSNNITTSAMNTGNLLNSGGMLGGNLSNGYQHSSSNFGLGSGGNMSSMSSQRNTGQMMPTPGFVNSSTNNNSNNGQSYLSVEASNNSGGFSTAPMMVPQTQQQQLRQDIGGQNSRMLQNHGSQMGVGLRPGMQQKLSNVSNSSINGGVGMNAKSVDSGTSYTNPIRNSQQAYDNLQRSGMQGDGYGTNNSDPFGSGNLYGAVTSVGMMTNTQNANTASFQAVSRTSSSLSHQQQQFQQQPNRFQQQPNQFHQQQQQFLHQQQLKQQSQQQQRFISHDAFGQNNVASDMVTHVKHEPGMENPSESIHSQTPEQFQLSQFQNQYQNNAEDRHAGSQILPVTSQSDMCTSVPQNSQQIQQMLHPHSMASDSVNGFSNLSVGVKTESGMRGHWQSQSQEHTQMSNSMSNERHIQEDFRQRMSGTDEAQPNNMSGGSIIGQNRVSTTSESLNPQNPTATTCRNGNGNRDPRFKNQQKWLLFLRHARHCKAPEGKCPDRNCVTVQKLWKHMDSCAAPQCSYPRCLPTKTLINHHRSCKEPNCPVCIPVKAYLQQQANARSLARLKNETDAARSVNGGGISSDAVQTSAGAKSCTSPGADISGHLQPSLKRLKVEQSSQPVDVETESCKSSVVSVTEAQSSQYAERKDHKHSDVRAPSKYFEVKAEVSDFSVQTRPGFKDTKIGIAENIPKQRPVSQPDKQDLSDVSPMQETTKVEKEPESLKKENLAESTEHTSKSGKPEIKGVSLTELFTPEQVREHIRGLRQWVGQSKAKAEKNQAMEHSMSENSCQLCAVEKLTFEPPPIYCTPCGARIKRNAMYYTVGAGDTRHYFCIPCYNESRGDTILAEGTPMPKARLEKKKNDEETEEWWVQCDKCEAWQHQICALFNGRRNDGGQAEYTCPYCFIAEVEQSKRKPLPQSAVLGAKDLPRTILSDHIEQRLFKRLKQERTERARAQGKSYDEIPTAESLVIRVVSSVDKKLEVKPRFLEIFREDSYPTEFAYKSKVVLLFQKIEGVEVCLFGMYVQEFGSECAFPNQRRVYLSYLDSVKYFRPEVRSYNGEALRTFVYHEILIGYLEYCKLRGFTSCYIWACPPLKGEDYILYCHPEIQKTPKSDKLREWYLAMLRKASKEGIVAETINLYDHFFMQTGECRAKVTAARLPYFDGDYWPGAAEDLIYQMSQEEDGRKGNKKGMLKKTITKRALKASGQTDLSGNASKDLLLMHRLGETIHPMKEDFIMVHLQPSCTHCCILMVSGNRWVCSQCKHFQICDKCYEAEQRREDRERHPVNFKDKHALYPVEIMDIPADTRDKDEILESEFFDTRQAFLSLCQGNHYQYDTLRRAKHSSMMVLYHLHNPTAPAFVTTCNACHLDIETGQGWRCEVCPDYDVCNACFSRDGGVNHPHKLTNHPSLADQNAQNKEARQLRVLQLRKMLDLLVHASQCRSAHCQYPNCRKVKGLFRHGINCKVRASGGCVLCKKMWYLLQLHARACKESECHVPRCRDLKEHLRRLQQQSDSRRRAAVMEMMRQRAAEVAGGSG.

Residues 1–16 show a composition bias toward polar residues; the sequence is MNVQAHMSGQVSNQGT. 6 disordered regions span residues 1-45, 202-221, 385-439, 555-574, 583-631, and 843-901; these read MNVQ…LGPS, SNFG…QRNT, SFQA…QQQR, HWQS…SNER, RMSG…GNRD, and IGIA…GKPE. Low complexity-rich tracts occupy residues 17 to 28 and 202 to 217; these read MSQQNGNSQMQN and SNFG…SMSS. A compositionally biased stretch (polar residues) spans 385-398; the sequence is SFQAVSRTSSSLSH. Residues 399–439 show a composition bias toward low complexity; the sequence is QQQQFQQQPNRFQQQPNQFHQQQQQFLHQQQLKQQSQQQQR. Composition is skewed to polar residues over residues 556-571 and 584-628; these read WQSQ…NSMS and MSGT…NGNG. Residues 629–709 form a TAZ-type 1 zinc finger; it reads NRDPRFKNQQ…EPNCPVCIPV (81 aa). Over residues 873–901 the composition is skewed to basic and acidic residues; that stretch reads TKVEKEPESLKKENLAESTEHTSKSGKPE. A PHD-type zinc finger spans residues 989–1066; that stretch reads HYFCIPCYNE…EYTCPYCFIA (78 aa). One can recognise a CBP/p300-type HAT domain in the interval 1081–1517; it reads VLGAKDLPRT…VLYHLHNPTA (437 aa). Residues 1204–1206, 1223–1224, and W1279 contribute to the acetyl-CoA site; these read LDS and RT. ZZ-type zinc fingers lie at residues 1399–1462 and 1519–1572; these read HLQP…IMDI and AFVT…SLAD. Zn(2+) is bound by residues C1404, C1407, C1419, C1422, C1428, C1431, H1444, H1452, C1524, C1527, C1539, C1542, C1548, C1551, H1560, and H1562. A TAZ-type 2 zinc finger spans residues 1579 to 1662; it reads EARQLRVLQL…ECHVPRCRDL (84 aa).

As to expression, rosette leaves, stems and flowers.

The protein localises to the nucleus. The catalysed reaction is L-lysyl-[protein] + acetyl-CoA = N(6)-acetyl-L-lysyl-[protein] + CoA + H(+). Acetyltransferase enzyme. Acetylates histones, giving a specific tag for transcriptional activation. This Arabidopsis thaliana (Mouse-ear cress) protein is Histone acetyltransferase HAC1 (HAC1).